We begin with the raw amino-acid sequence, 476 residues long: Ribulose bisphosphate carboxylase large chain (476 aa).

Asn124 and Thr174 together coordinate substrate. The active-site Proton acceptor is Lys176. Lys178 contacts substrate. 3 residues coordinate Mg(2+): Lys202, Asp204, and Glu205. Lys202 bears the N6-carboxylysine mark. Residue His295 is the Proton acceptor of the active site. The substrate site is built by Arg296, His328, and Ser380.

Belongs to the RuBisCO large chain family. Type I subfamily. As to quaternary structure, heterohexadecamer of 8 large chains and 8 small chains; disulfide-linked. The disulfide link is formed within the large subunit homodimers. Mg(2+) serves as cofactor. In terms of processing, the disulfide bond which can form in the large chain dimeric partners within the hexadecamer appears to be associated with oxidative stress and protein turnover.

The protein localises to the carboxysome. The catalysed reaction is 2 (2R)-3-phosphoglycerate + 2 H(+) = D-ribulose 1,5-bisphosphate + CO2 + H2O. It catalyses the reaction D-ribulose 1,5-bisphosphate + O2 = 2-phosphoglycolate + (2R)-3-phosphoglycerate + 2 H(+). RuBisCO catalyzes two reactions: the carboxylation of D-ribulose 1,5-bisphosphate, the primary event in carbon dioxide fixation, as well as the oxidative fragmentation of the pentose substrate in the photorespiration process. Both reactions occur simultaneously and in competition at the same active site. The sequence is that of Ribulose bisphosphate carboxylase large chain from Cyanothece sp. (strain PCC 7425 / ATCC 29141).